We begin with the raw amino-acid sequence, 89 residues long: Nitrogen regulatory protein (89 aa).

The PTS EIIA type-2 domain maps to 6 to 89; that stretch reads TILTPGRSLV…ALLHLEAPID (84 aa). The Tele-phosphohistidine intermediate role is filled by His68.

The protein localises to the cytoplasm. Functionally, seems to have a role in regulating nitrogen assimilation. This chain is Nitrogen regulatory protein (ptsN), found in Pseudomonas putida (Arthrobacter siderocapsulatus).